Consider the following 217-residue polypeptide: Adenylate kinase (217 aa).

11 to 16 (GSGKGT) contacts ATP. An NMP region spans residues 31–61 (STGTMLRQALTRSTHKSYELHKNIMHTGDLV). AMP-binding positions include Thr-32, Arg-37, 59 to 61 (DLV), 87 to 90 (GFPR), and Gln-94. Residues 124-161 (GRRIHVGSGRTYHIKFNPPRNYGLDDITGEILTTRKDD) form an LID region. Residues Arg-125 and 134–135 (TY) contribute to the ATP site. AMP-binding residues include Arg-158 and Arg-169. Arg-202 contributes to the ATP binding site.

It belongs to the adenylate kinase family. As to quaternary structure, monomer.

The protein resides in the cytoplasm. It carries out the reaction AMP + ATP = 2 ADP. Its pathway is purine metabolism; AMP biosynthesis via salvage pathway; AMP from ADP: step 1/1. Functionally, catalyzes the reversible transfer of the terminal phosphate group between ATP and AMP. Plays an important role in cellular energy homeostasis and in adenine nucleotide metabolism. The protein is Adenylate kinase of Blochmanniella pennsylvanica (strain BPEN).